The sequence spans 349 residues: tRNA pseudouridine synthase D (349 aa).

Substrate is bound at residue Phe27. Catalysis depends on Asp80, which acts as the Nucleophile. Asn129 contributes to the substrate binding site. In terms of domain architecture, TRUD spans 155–303 (GVPNYFGAQR…VEAARRAMLL (149 aa)). A substrate-binding site is contributed by Phe329.

This sequence belongs to the pseudouridine synthase TruD family.

It carries out the reaction uridine(13) in tRNA = pseudouridine(13) in tRNA. Functionally, responsible for synthesis of pseudouridine from uracil-13 in transfer RNAs. This chain is tRNA pseudouridine synthase D, found in Escherichia fergusonii (strain ATCC 35469 / DSM 13698 / CCUG 18766 / IAM 14443 / JCM 21226 / LMG 7866 / NBRC 102419 / NCTC 12128 / CDC 0568-73).